We begin with the raw amino-acid sequence, 897 residues long: Cytokine receptor common subunit beta (897 aa).

The N-terminal stretch at 1–16 (MVLAQGLLSMALLALC) is a signal peptide. Over 17-443 (WERSLAGAEE…WDTESVLPMW (427 aa)) the chain is Extracellular. Residues Cys-35 and Cys-45 are joined by a disulfide bond. N-linked (GlcNAc...) asparagine glycosylation is present at Asn-58. Intrachain disulfides connect Cys-75/Cys-96 and Cys-86/Cys-91. Positions 133–240 (PPEPRDLQIS…PEVCWDSQPG (108 aa)) constitute a Fibronectin type-III 1 domain. Residue Asn-191 is glycosylated (N-linked (GlcNAc...) asparagine). Cystine bridges form between Cys-250-Cys-260 and Cys-289-Cys-306. One can recognise a Fibronectin type-III 2 domain in the interval 339–436 (QMAPPSLNVT…EWSEARSWDT (98 aa)). An N-linked (GlcNAc...) asparagine glycan is attached at Asn-346. A WSXWS motif motif is present at residues 425 to 429 (WSEWS). Residues 444-460 (VLALIVIFLTIAVLLAL) form a helical membrane-spanning segment. The Cytoplasmic portion of the chain corresponds to 461–897 (RFCGIYGYRL…WEVNKPGEVC (437 aa)). Residues 474 to 482 (WEEKIPNPS) carry the Box 1 motif motif. 4 disordered regions span residues 498 to 517 (GSMSAFTSGSPPHQGPWGSR), 532 to 630 (SEVS…EYLC), 648 to 812 (PGQA…QPEG), and 830 to 849 (PGPLSLRSKPSSPGPGPEIK). The span at 564 to 574 (EQPPSPQPGPP) shows a compositional bias: pro residues. Positions 723–752 (SGASSVSLVPSLGLPSDQTPSLCPGLASGP) are enriched in low complexity. At Tyr-766 the chain carries Phosphotyrosine. Over residues 830–840 (PGPLSLRSKPS) the composition is skewed to low complexity.

Belongs to the type I cytokine receptor family. Type 4 subfamily. As to quaternary structure, heterodimer of an alpha and a beta subunit. The beta subunit is common to the IL3, IL5 and GM-CSF receptors. The signaling GM-CSF receptor complex is a dodecamer of two head-to-head hexamers of two alpha, two beta, and two ligand subunits. Interacts with TMEM102; this interaction occurs preferentially in the absence of CSF2. Interacts with FCER1G; this interaction is direct. Interacts with LYN. Interacts with JAK1. Post-translationally, may be phosphorylated by LYN.

It localises to the membrane. In terms of biological role, cell surface receptor that plays a role in immune response and controls the production and differentiation of hematopoietic progenitor cells into lineage-restricted cells. Acts by forming an heterodimeric receptor through interaction with different partners such as IL3RA, IL5RA or CSF2RA. In turn, participates in various signaling pathways including interleukin-3, interleukin-5 and granulocyte-macrophage colony-stimulating factor/CSF2 pathways. In unstimulated conditions, interacts constitutively with JAK1 and ligand binding leads to JAK1 stimulation and subsequent activation of the JAK-STAT pathway. The sequence is that of Cytokine receptor common subunit beta (CSF2RB) from Homo sapiens (Human).